A 227-amino-acid chain; its full sequence is MLKIRSLGHSTFFLDDGTHRLLIEPFLEGNPRCPVTLGEVQSWQPSAVLISHAHGDHWGNALDFGRAGVPIIATAEIAGYAGAHGANNAVGMNIGGTYRAEWGSVSLTPAWHSSSFPDGTYGGMPTGLVIEFGGQRLYFAGDTALFSDMRLIGDRELDLAFLPIGDHYTMGPEEAGRTLDLLRPRVAIPMHYATFPALTGDPAVFRTEGERRGVEVRVLDPGETTEL.

Belongs to the UPF0173 family.

The sequence is that of UPF0173 metal-dependent hydrolase DR_0006 from Deinococcus radiodurans (strain ATCC 13939 / DSM 20539 / JCM 16871 / CCUG 27074 / LMG 4051 / NBRC 15346 / NCIMB 9279 / VKM B-1422 / R1).